The primary structure comprises 117 residues: Large ribosomal subunit protein bL20 (117 aa).

It belongs to the bacterial ribosomal protein bL20 family.

Functionally, binds directly to 23S ribosomal RNA and is necessary for the in vitro assembly process of the 50S ribosomal subunit. It is not involved in the protein synthesizing functions of that subunit. The polypeptide is Large ribosomal subunit protein bL20 (Neorickettsia sennetsu (strain ATCC VR-367 / Miyayama) (Ehrlichia sennetsu)).